We begin with the raw amino-acid sequence, 443 residues long: MKLDSFMVTRRGNPELVAPARATPRGTKPLSDLDDDWDLRYLQPCLEFFRAVDDGERRKPARPGDAIRAALAEALVYYYPIAGRLRELPKGGRLAVECTGEGVVFVEAEADVRIEDLGEPPLPTFRGAESFLCDVGDAGVVVGRPLFYMQITHLKCGGFVLGTHICHCIADAFGTLQFLKAIVDIARGEAKPTTLPVWEREHFVATSLPPNIKEEQEKLFDELENTTCDDIMVTMPAENMVSEYFTISQRDMIALRRHVPFNLTKTVTSFELLTAVLWRSRTMALGYKPCQIVRLMITVNARGRWKKLPLGYYGNGLLCPVIEITVNDLCTNSLGHTIELVRKAKHEMKTKENMQLMVDLLPLWREKPYIKVERIFETCDIKWIGQDTLDIGWAKRIGGGIPTVSLPDMTSYQFMCKNEKGDHILVFHTTNAVMHLPLVIKRK.

Active-site proton acceptor residues include H167 and D390.

This sequence belongs to the plant acyltransferase family.

Hydroxycinnamoyl transferase that catalyzes the transfer of an acyl from p-coumaryol-CoA to spermidine, to produce coumaroyl spermidine. Can use feruloyl-CoA as acyl donor. Contributes to the natural variation of spermidine-based phenolamides in rice cultivars. In Oryza sativa subsp. japonica (Rice), this protein is Spermidine hydroxycinnamoyltransferase 1.